A 166-amino-acid chain; its full sequence is Crossover junction endodeoxyribonuclease RuvC (166 aa).

Catalysis depends on residues Asp11, Glu71, and Asp142. Residues Asp11, Glu71, and Asp142 each coordinate Mg(2+).

Belongs to the RuvC family. As to quaternary structure, homodimer which binds Holliday junction (HJ) DNA. The HJ becomes 2-fold symmetrical on binding to RuvC with unstacked arms; it has a different conformation from HJ DNA in complex with RuvA. In the full resolvosome a probable DNA-RuvA(4)-RuvB(12)-RuvC(2) complex forms which resolves the HJ. Mg(2+) serves as cofactor.

The protein resides in the cytoplasm. The enzyme catalyses Endonucleolytic cleavage at a junction such as a reciprocal single-stranded crossover between two homologous DNA duplexes (Holliday junction).. Its function is as follows. The RuvA-RuvB-RuvC complex processes Holliday junction (HJ) DNA during genetic recombination and DNA repair. Endonuclease that resolves HJ intermediates. Cleaves cruciform DNA by making single-stranded nicks across the HJ at symmetrical positions within the homologous arms, yielding a 5'-phosphate and a 3'-hydroxyl group; requires a central core of homology in the junction. The consensus cleavage sequence is 5'-(A/T)TT(C/G)-3'. Cleavage occurs on the 3'-side of the TT dinucleotide at the point of strand exchange. HJ branch migration catalyzed by RuvA-RuvB allows RuvC to scan DNA until it finds its consensus sequence, where it cleaves and resolves the cruciform DNA. The chain is Crossover junction endodeoxyribonuclease RuvC from Maricaulis maris (strain MCS10) (Caulobacter maris).